Reading from the N-terminus, the 34-residue chain is Potassium channel toxin alpha-KTx 6.17 (34 aa).

4 disulfide bridges follow: Cys3–Cys24, Cys9–Cys29, Cys13–Cys31, and Cys19–Cys34.

This sequence belongs to the short scorpion toxin superfamily. Potassium channel inhibitor family. Alpha-KTx 06 subfamily. In terms of tissue distribution, expressed by the venom gland.

Its subcellular location is the secreted. Functionally, this toxin reversibly blocks Shaker B potassium-channels (expressed in insect Sf9 cells) with a Kd of 96.6 nM, and presents an even better affinity toward hKv1.3 (KCNA3), blocking it with a Kd of 17.7 nM. This is Potassium channel toxin alpha-KTx 6.17 from Opisthacanthus cayaporum (South American scorpion).